Here is a 486-residue protein sequence, read N- to C-terminus: Cardiolipin synthase A (486 aa).

2 helical membrane passes run 3-23 (TFYT…IAGV) and 38-58 (MAWL…YLSF). PLD phosphodiesterase domains are found at residues 219–246 (MDLR…VDPR) and 399–426 (EGGL…DMRS). Active-site residues include H224, K226, D231, H404, K406, and D411.

This sequence belongs to the phospholipase D family. Cardiolipin synthase subfamily. ClsA sub-subfamily.

It is found in the cell inner membrane. It catalyses the reaction 2 a 1,2-diacyl-sn-glycero-3-phospho-(1'-sn-glycerol) = a cardiolipin + glycerol. Catalyzes the reversible phosphatidyl group transfer from one phosphatidylglycerol molecule to another to form cardiolipin (CL) (diphosphatidylglycerol) and glycerol. The polypeptide is Cardiolipin synthase A (Yersinia pseudotuberculosis serotype O:3 (strain YPIII)).